The primary structure comprises 359 residues: Probable NAD(P)H nitroreductase PigM (359 aa).

Belongs to the nitroreductase family. FMN is required as a cofactor.

The protein operates within antibiotic biosynthesis; prodigiosin biosynthesis. In terms of biological role, involved in the biosynthesis of 4-methoxy-2,2'-bipyrrole-5-carbaldehyde (MBC), one of the terminal products involved in the biosynthesis of the red antibiotic prodigiosin (Pig). Catalyzes the oxidation of the hydroxy group of 4-hydroxy-2,2'-bipyrrole-5-methanol (HBM) to yield 4-methoxy-2,2'-bipyrrole-5-carbaldehyde (MBC). In Serratia sp. (strain ATCC 39006) (Prodigiosinella confusarubida), this protein is Probable NAD(P)H nitroreductase PigM.